Reading from the N-terminus, the 541-residue chain is Protein yellow (541 aa).

Positions 1-21 (MFQDKGWILVTLITLVTPSWA) are cleaved as a signal peptide. Residues Asn144 and Asn215 are each glycosylated (N-linked (GlcNAc...) asparagine). Residues 443 to 463 (QKPQTSWASSPPPPSRTYLPA) are disordered.

The protein belongs to the major royal jelly protein family.

The protein resides in the secreted. Functionally, controls the pigmentation pattern of the adult cuticle and larval mouth parts. This chain is Protein yellow (y), found in Drosophila melanogaster (Fruit fly).